The sequence spans 133 residues: Large ribosomal subunit protein eL14 (133 aa).

This sequence belongs to the eukaryotic ribosomal protein eL14 family.

This chain is Large ribosomal subunit protein eL14, found in Pisum sativum (Garden pea).